A 363-amino-acid chain; its full sequence is NAD(P)H-quinone oxidoreductase subunit 1, chloroplastic (363 aa).

The next 6 membrane-spanning stretches (helical) occupy residues 30–50 (FLPILTLVLGITIGVLVIVWL), 104–124 (IAVISILLSYSVIPFSYHLVL), 129–149 (IGVFLWIAISSIAPIGLLMSG), 248–268 (YSGIKFGLFYVASYLNLLVSS), 300–320 (VFGTTIGIFITLAKTYFFLFI), and 343–363 (FLLPISLGNLLLTTSFQLLSL).

It belongs to the complex I subunit 1 family. NDH is composed of at least 16 different subunits, 5 of which are encoded in the nucleus.

The protein localises to the plastid. It is found in the chloroplast thylakoid membrane. It catalyses the reaction a plastoquinone + NADH + (n+1) H(+)(in) = a plastoquinol + NAD(+) + n H(+)(out). The catalysed reaction is a plastoquinone + NADPH + (n+1) H(+)(in) = a plastoquinol + NADP(+) + n H(+)(out). In terms of biological role, NDH shuttles electrons from NAD(P)H:plastoquinone, via FMN and iron-sulfur (Fe-S) centers, to quinones in the photosynthetic chain and possibly in a chloroplast respiratory chain. The immediate electron acceptor for the enzyme in this species is believed to be plastoquinone. Couples the redox reaction to proton translocation, and thus conserves the redox energy in a proton gradient. This chain is NAD(P)H-quinone oxidoreductase subunit 1, chloroplastic, found in Eucalyptus globulus subsp. globulus (Tasmanian blue gum).